The sequence spans 92 residues: Small ribosomal subunit protein uS19 (92 aa).

The protein belongs to the universal ribosomal protein uS19 family.

Functionally, protein S19 forms a complex with S13 that binds strongly to the 16S ribosomal RNA. In Polaromonas naphthalenivorans (strain CJ2), this protein is Small ribosomal subunit protein uS19.